A 154-amino-acid polypeptide reads, in one-letter code: 6,7-dimethyl-8-ribityllumazine synthase (154 aa).

5-amino-6-(D-ribitylamino)uracil contacts are provided by residues Phe22, 56–58, and 80–82; these read AFE and AVI. Residue 85 to 86 coordinates (2S)-2-hydroxy-3-oxobutyl phosphate; sequence AT. Catalysis depends on His88, which acts as the Proton donor. Residue Phe113 coordinates 5-amino-6-(D-ribitylamino)uracil. Arg127 contacts (2S)-2-hydroxy-3-oxobutyl phosphate.

Belongs to the DMRL synthase family.

The catalysed reaction is (2S)-2-hydroxy-3-oxobutyl phosphate + 5-amino-6-(D-ribitylamino)uracil = 6,7-dimethyl-8-(1-D-ribityl)lumazine + phosphate + 2 H2O + H(+). The protein operates within cofactor biosynthesis; riboflavin biosynthesis; riboflavin from 2-hydroxy-3-oxobutyl phosphate and 5-amino-6-(D-ribitylamino)uracil: step 1/2. Catalyzes the formation of 6,7-dimethyl-8-ribityllumazine by condensation of 5-amino-6-(D-ribitylamino)uracil with 3,4-dihydroxy-2-butanone 4-phosphate. This is the penultimate step in the biosynthesis of riboflavin. This Clostridium botulinum (strain 657 / Type Ba4) protein is 6,7-dimethyl-8-ribityllumazine synthase.